The sequence spans 280 residues: Killer cell lectin-like receptor 7 (280 aa).

Topologically, residues 1–44 (MSEQEVTYSTVRFHESSRLQKLVRTEEPQRPREACYREYSVPWK) are cytoplasmic. A helical; Signal-anchor for type II membrane protein transmembrane segment spans residues 45–66 (LIVIACGILCFLLLVTVALLAI). Residues 67-280 (TIFQHSQQKH…CGKRLDKFPH (214 aa)) lie on the Extracellular side of the membrane. N104 is a glycosylation site (N-linked (GlcNAc...) asparagine). The C-type lectin domain occupies 156–275 (GFEKYWFCYG…SYICICGKRL (120 aa)). Intrachain disulfides connect C163–C168, C181–C269, C185–C271, and C250–C263. An N-linked (GlcNAc...) asparagine glycan is attached at N239.

In terms of assembly, homodimer; disulfide-linked.

The protein resides in the membrane. Receptor on natural killer (NK) cells for class I MHC. This Mus musculus (Mouse) protein is Killer cell lectin-like receptor 7 (Klra7).